A 397-amino-acid polypeptide reads, in one-letter code: Glutamate 5-kinase (397 aa).

Positions 1–28 (MVADLTSDISESQEQETETNSANNNGAV) are disordered. Residue lysine 40 participates in ATP binding. Substrate is bound by residues serine 80, aspartate 168, and asparagine 180. ATP contacts are provided by residues 200–201 (SD) and 243–249 (SGGMASK). The region spanning 306–383 (HGQVYIDQGA…QEIADILGYE (78 aa)) is the PUA domain.

The protein belongs to the glutamate 5-kinase family.

The protein localises to the cytoplasm. It catalyses the reaction L-glutamate + ATP = L-glutamyl 5-phosphate + ADP. It functions in the pathway amino-acid biosynthesis; L-proline biosynthesis; L-glutamate 5-semialdehyde from L-glutamate: step 1/2. Catalyzes the transfer of a phosphate group to glutamate to form L-glutamate 5-phosphate. The polypeptide is Glutamate 5-kinase (Zymomonas mobilis subsp. mobilis (strain ATCC 31821 / ZM4 / CP4)).